Here is a 208-residue protein sequence, read N- to C-terminus: NADH-ubiquinone oxidoreductase chain 4 (208 aa).

6 consecutive transmembrane segments (helical) span residues 23 to 43 (VWIN…VTLW), 60 to 80 (SLSS…LLAS), 93 to 113 (KMYI…FSAN), 114 to 134 (ELIM…IIIT), 147 to 167 (LYFL…LISI), and 188 to 208 (PTWS…IKMP).

It belongs to the complex I subunit 4 family. As to quaternary structure, core subunit of respiratory chain NADH dehydrogenase (Complex I) which is composed of 45 different subunits.

Its subcellular location is the mitochondrion inner membrane. The enzyme catalyses a ubiquinone + NADH + 5 H(+)(in) = a ubiquinol + NAD(+) + 4 H(+)(out). Its function is as follows. Core subunit of the mitochondrial membrane respiratory chain NADH dehydrogenase (Complex I) which catalyzes electron transfer from NADH through the respiratory chain, using ubiquinone as an electron acceptor. Essential for the catalytic activity and assembly of complex I. This Phodopus sungorus (Striped hairy-footed hamster) protein is NADH-ubiquinone oxidoreductase chain 4 (MT-ND4).